A 99-amino-acid chain; its full sequence is Small ribosomal subunit protein bS18 (99 aa).

Belongs to the bacterial ribosomal protein bS18 family. In terms of assembly, part of the 30S ribosomal subunit. Forms a tight heterodimer with protein bS6.

In terms of biological role, binds as a heterodimer with protein bS6 to the central domain of the 16S rRNA, where it helps stabilize the platform of the 30S subunit. The sequence is that of Small ribosomal subunit protein bS18 from Christiangramia forsetii (strain DSM 17595 / CGMCC 1.15422 / KT0803) (Gramella forsetii).